The following is a 248-amino-acid chain: MLYLHDVWVNWFEGEENGYNVCHFYEWRKDDTIELLDQVPLLKVDATLYHYIEDELLELPQKLLEDVHHKAYIRKNHERLQQEYCFVVTDGKGIIAIDTIGYNVPIRKSRLIPRQEQMVYEMVENVQAEKYEFQVEETEKEHHILSPSPFIMNGLTRKERQLKQLLFMALDQLHTTKNTAEIRYWYTEWDPSAYGTVQHMEFEDIWARLYDEAESGWSEKHEQLCERLVKGQPFFEKLWEMENEQKVN.

This sequence belongs to the UPF0736 family.

The protein is UPF0736 protein BCG9842_B4111 of Bacillus cereus (strain G9842).